A 210-amino-acid polypeptide reads, in one-letter code: Rho-related GTP-binding protein RhoD (210 aa).

24-31 is a GTP binding site; it reads GDGGCGKT. The short motif at 46–54 is the Effector region element; it reads YSPTVFERY. GTP is bound by residues 71-75 and 129-132; these read DTAGQ and CKID. Position 207 is a cysteine methyl ester (Cys-207). The S-geranylgeranyl cysteine moiety is linked to residue Cys-207. The propeptide at 208-210 is removed in mature form; sequence LAT.

Belongs to the small GTPase superfamily. Rho family. As to quaternary structure, interacts with PAK5. Interacts (in GTP-bound form) with DAPK3, FILIP1 and WHAMM. Interacts (independent of GTP-loaded status) with ANKFY1. Widely expressed.

It localises to the cell membrane. Its subcellular location is the early endosome. In terms of biological role, involved in endosome dynamics. May coordinate membrane transport with the function of the cytoskeleton. Involved in the internalization and trafficking of activated tyrosine kinase receptors such as PDGFRB. Participates in the reorganization of actin cytoskeleton; the function seems to involve WHAMM and includes regulation of filopodia formation and actin filament bundling. Can modulate the effect of DAPK3 in reorganization of actin cytoskeleton and focal adhesion dissolution. The polypeptide is Rho-related GTP-binding protein RhoD (Rhod) (Mus musculus (Mouse)).